The chain runs to 100 residues: Small ribosomal subunit protein uS14 (100 aa).

This sequence belongs to the universal ribosomal protein uS14 family. As to quaternary structure, part of the 30S ribosomal subunit. Contacts proteins S3 and S10.

In terms of biological role, binds 16S rRNA, required for the assembly of 30S particles and may also be responsible for determining the conformation of the 16S rRNA at the A site. The polypeptide is Small ribosomal subunit protein uS14 (Parasynechococcus marenigrum (strain WH8102)).